We begin with the raw amino-acid sequence, 220 residues long: Iron-sulfur cluster repair protein YtfE (220 aa).

It belongs to the RIC family. YtfE subfamily. In terms of assembly, homodimer.

The protein localises to the cytoplasm. In terms of biological role, di-iron-containing protein involved in the repair of iron-sulfur clusters damaged by oxidative and nitrosative stress conditions. The sequence is that of Iron-sulfur cluster repair protein YtfE from Enterobacter sp. (strain 638).